Consider the following 406-residue polypeptide: UPF0754 membrane protein CYA_0973 (406 aa).

Helical transmembrane passes span 1 to 21 (MALW…YFTN) and 385 to 405 (IVNL…LFLL).

It belongs to the UPF0754 family.

The protein localises to the cell inner membrane. This Synechococcus sp. (strain JA-3-3Ab) (Cyanobacteria bacterium Yellowstone A-Prime) protein is UPF0754 membrane protein CYA_0973.